We begin with the raw amino-acid sequence, 2620 residues long: Ubiquitin carboxyl-terminal hydrolase 24 (2620 aa).

A UBA domain is found at 3-44 (SEEEQHMTTLLCMGFSDPATIRKALRLAKNDINEAVALLTNE). Positions 45–102 (RPGLDYGGYEPMDSGGGPSPGPGGGPRGDGGGDGGGGGPSRGGSTGGGGGFDPPPAYH) are disordered. Residues 58–95 (SGGGPSPGPGGGPRGDGGGDGGGGGPSRGGSTGGGGGF) show a composition bias toward gly residues. 2 positions are modified to phosphoserine: Ser63 and Ser88. At Tyr942 the chain carries Phosphotyrosine. 2 disordered regions span residues 1034 to 1054 (TSGS…SSSS) and 1129 to 1151 (TLLS…QQHQ). A compositionally biased stretch (low complexity) spans 1131-1151 (LSESSSQSSKSPSLSSKQQHQ). 2 positions are modified to phosphoserine: Ser1141 and Ser1285. Positions 1689-2042 (VGLRNGGATC…NAYMLFYQRV (354 aa)) constitute a USP domain. The Nucleophile role is filled by Cys1698. Residues 1921–1945 (ARQDSSSEVGENGRSVDQGGGGSPR) form a disordered region. Position 1943 is a phosphoserine (Ser1943). His1970 (proton acceptor) is an active-site residue. Ser2047, Ser2077, and Ser2561 each carry phosphoserine. Residues 2063–2090 (AEDLSLSAPSSPEISPQSSPRPHRPNND) are disordered. Residues 2069–2082 (SAPSSPEISPQSSP) are compositionally biased toward low complexity. Thr2565 is modified (phosphothreonine). The interval 2575-2620 (EKEQSGSSNGSESSPANENGDRHLQQGSESPMMIGELRSDLDDVDP) is disordered. Residues 2579–2592 (SGSSNGSESSPANE) are compositionally biased toward low complexity. Ser2604 is modified (phosphoserine). Basic and acidic residues predominate over residues 2611–2620 (LRSDLDDVDP).

It belongs to the peptidase C19 family. (Microbial infection) Interacts with human cytomegalovirus protein UL38.

The enzyme catalyses Thiol-dependent hydrolysis of ester, thioester, amide, peptide and isopeptide bonds formed by the C-terminal Gly of ubiquitin (a 76-residue protein attached to proteins as an intracellular targeting signal).. Ubiquitin-specific protease that regulates cell survival in various contexts through modulating the protein stability of some of its substrates including DDB2, MCL1 or TP53. Plays a positive role on ferritinophagy where ferritin is degraded in lysosomes and releases free iron. The chain is Ubiquitin carboxyl-terminal hydrolase 24 (USP24) from Homo sapiens (Human).